The chain runs to 237 residues: tRNA1(Val) (adenine(37)-N6)-methyltransferase (237 aa).

Belongs to the methyltransferase superfamily. tRNA (adenine-N(6)-)-methyltransferase family.

It is found in the cytoplasm. The enzyme catalyses adenosine(37) in tRNA1(Val) + S-adenosyl-L-methionine = N(6)-methyladenosine(37) in tRNA1(Val) + S-adenosyl-L-homocysteine + H(+). Specifically methylates the adenine in position 37 of tRNA(1)(Val) (anticodon cmo5UAC). This chain is tRNA1(Val) (adenine(37)-N6)-methyltransferase, found in Tolumonas auensis (strain DSM 9187 / NBRC 110442 / TA 4).